Here is a 195-residue protein sequence, read N- to C-terminus: Imidazoleglycerol-phosphate dehydratase (195 aa).

The protein belongs to the imidazoleglycerol-phosphate dehydratase family.

It is found in the cytoplasm. The enzyme catalyses D-erythro-1-(imidazol-4-yl)glycerol 3-phosphate = 3-(imidazol-4-yl)-2-oxopropyl phosphate + H2O. The protein operates within amino-acid biosynthesis; L-histidine biosynthesis; L-histidine from 5-phospho-alpha-D-ribose 1-diphosphate: step 6/9. The polypeptide is Imidazoleglycerol-phosphate dehydratase (Aromatoleum aromaticum (strain DSM 19018 / LMG 30748 / EbN1) (Azoarcus sp. (strain EbN1))).